We begin with the raw amino-acid sequence, 197 residues long: Small ribosomal subunit protein uS4B (197 aa).

The 63-residue stretch at 88-150 (SRLDNMVYRM…SRKTEMFVNN (63 aa)) folds into the S4 RNA-binding domain.

The protein belongs to the universal ribosomal protein uS4 family. In terms of assembly, part of the 30S ribosomal subunit. Contacts protein S5. The interaction surface between S4 and S5 is involved in control of translational fidelity.

One of the primary rRNA binding proteins, it binds directly to 16S rRNA where it nucleates assembly of the body of the 30S subunit. In terms of biological role, with S5 and S12 plays an important role in translational accuracy. The protein is Small ribosomal subunit protein uS4B (rpsD2) of Clostridium perfringens (strain 13 / Type A).